The following is a 409-amino-acid chain: LL-diaminopimelate aminotransferase (409 aa).

Substrate contacts are provided by Tyr-15 and Gly-42. Pyridoxal 5'-phosphate-binding positions include Tyr-72, 108–109 (SK), Tyr-132, Asn-187, Tyr-218, and 246–248 (SFS). Residues Lys-109, Tyr-132, and Asn-187 each coordinate substrate. Lys-249 bears the N6-(pyridoxal phosphate)lysine mark. Positions 257 and 292 each coordinate pyridoxal 5'-phosphate. 2 residues coordinate substrate: Asn-292 and Arg-388.

It belongs to the class-I pyridoxal-phosphate-dependent aminotransferase family. LL-diaminopimelate aminotransferase subfamily. As to quaternary structure, homodimer. It depends on pyridoxal 5'-phosphate as a cofactor.

It carries out the reaction (2S,6S)-2,6-diaminopimelate + 2-oxoglutarate = (S)-2,3,4,5-tetrahydrodipicolinate + L-glutamate + H2O + H(+). It participates in amino-acid biosynthesis; L-lysine biosynthesis via DAP pathway; LL-2,6-diaminopimelate from (S)-tetrahydrodipicolinate (aminotransferase route): step 1/1. In terms of biological role, involved in the synthesis of meso-diaminopimelate (m-DAP or DL-DAP), required for both lysine and peptidoglycan biosynthesis. Catalyzes the direct conversion of tetrahydrodipicolinate to LL-diaminopimelate. This chain is LL-diaminopimelate aminotransferase, found in Acaryochloris marina (strain MBIC 11017).